A 184-amino-acid polypeptide reads, in one-letter code: Ribosome-recycling factor (184 aa).

The protein belongs to the RRF family.

The protein resides in the cytoplasm. In terms of biological role, responsible for the release of ribosomes from messenger RNA at the termination of protein biosynthesis. May increase the efficiency of translation by recycling ribosomes from one round of translation to another. In Agathobacter rectalis (strain ATCC 33656 / DSM 3377 / JCM 17463 / KCTC 5835 / VPI 0990) (Eubacterium rectale), this protein is Ribosome-recycling factor.